A 197-amino-acid chain; its full sequence is Carnitine operon protein CaiE (197 aa).

It belongs to the transferase hexapeptide repeat family.

The protein operates within amine and polyamine metabolism; carnitine metabolism. Its function is as follows. Overproduction of CaiE stimulates the activity of CaiB and CaiD. This is Carnitine operon protein CaiE from Citrobacter koseri (strain ATCC BAA-895 / CDC 4225-83 / SGSC4696).